Consider the following 287-residue polypeptide: Putative DNA-3-methyladenine glycosylase YfjP (287 aa).

D242 functions as the Proton acceptor in the catalytic mechanism.

The protein belongs to the alkylbase DNA glycosidase AlkA family.

It catalyses the reaction Hydrolysis of alkylated DNA, releasing 3-methyladenine, 3-methylguanine, 7-methylguanine and 7-methyladenine.. Hydrolysis of the deoxyribose N-glycosidic bond to excise 3-methyladenine, 3-methylguanine, 7-methylguanine, O2-methylthymine, and O2-methylcytosine from the damaged DNA polymer formed by alkylation lesions. In Bacillus subtilis (strain 168), this protein is Putative DNA-3-methyladenine glycosylase YfjP (yfjP).